We begin with the raw amino-acid sequence, 732 residues long: MIEDDGMLLNFSTDTTEDNNDSKFNSGKVTGGRWKERRKLKMMMEGREPVKRKTFEELENSDMDTNKKPKSDSSGRKSYNQQSNNESVKDVVRPVVSKVNPSQVNTQIVSSLFTAARQVETSVNINEHDDKEEINPSNAPLAADNFDSLKIEQQLVNHLNEKMRIQKPTSIQKLVLPQLLSSKNNDLFIHAQTGSGKTLAFALPILSKILSMKTRVDRKSGCFAIFITPTRELATQIYHVLSELTNCCHYLVPCLLIGGESKKSEKARLRKGCNFIIGTPGRILDHFQNTQSVKEQLAVSLRYVVLDEADKLMELGFEETLTDILKLIHDISLNTSVYPQLPSRIMHILCSATSKGSVTKLGNVALQNYKMISNSHVTNELENATVPDQLLQKIAIVPPKLRLVTLAATLDSIHRKHIEQKKKKLDYVSRTVVFLSCSDSVNFHFEAFSSSDANHRNLVGESARLLTKGNDILPSFDPENDPDFICYKLHGSLSQQIRSSTLQHFSKTNENVKGKHLVLFCTDVASRGLDLPEIGTVIELDPPFAVEDHLHRIGRTARAGKHGESLLFLLPGEEEGYMEYIKPYHTKGWKLVNYTNDLLKPSFQNVNVKRSDKETSKNVEEWDTNATTWHLNVERRVLEDSSFKDIAMKGYASHIRAYATHISKEKKFFNVKCLHLGHLAKSFALRERPKTMGLQNTKNGGEAKKNSKESAKNKMFRLARMAVKQSSGEFNY.

Residues 1 to 91 (MIEDDGMLLN…QSNNESVKDV (91 aa)) are disordered. Composition is skewed to basic and acidic residues over residues 42–56 (MMME…KTFE) and 64–75 (DTNKKPKSDSSG). Residues 76–86 (RKSYNQQSNNE) are compositionally biased toward polar residues. The Q motif signature appears at 144-173 (DNFDSLKIEQQLVNHLNEKMRIQKPTSIQK). Positions 178–372 (QLLSSKNNDL…NVALQNYKMI (195 aa)) constitute a Helicase ATP-binding domain. Residue 191–198 (AQTGSGKT) participates in ATP binding. The short motif at 307-310 (DEAD) is the DEAD box element. The region spanning 420-599 (QKKKKLDYVS…KLVNYTNDLL (180 aa)) is the Helicase C-terminal domain. A disordered region spans residues 692 to 711 (MGLQNTKNGGEAKKNSKESA). Over residues 701 to 711 (GEAKKNSKESA) the composition is skewed to basic and acidic residues.

The protein belongs to the DEAD box helicase family. DDX31/DBP7 subfamily.

It localises to the nucleus. The protein localises to the nucleolus. The enzyme catalyses ATP + H2O = ADP + phosphate + H(+). In terms of biological role, ATP-binding RNA helicase involved in the biogenesis of 60S ribosomal subunits and is required for the normal formation of 25S and 5.8S rRNAs. The chain is ATP-dependent RNA helicase DBP7 (DBP7) from Vanderwaltozyma polyspora (strain ATCC 22028 / DSM 70294 / BCRC 21397 / CBS 2163 / NBRC 10782 / NRRL Y-8283 / UCD 57-17) (Kluyveromyces polysporus).